The sequence spans 439 residues: Xylose isomerase (439 aa).

Residues histidine 101 and aspartate 104 contribute to the active site. Mg(2+) contacts are provided by glutamate 232, glutamate 268, histidine 271, aspartate 296, aspartate 307, aspartate 309, and aspartate 339.

Belongs to the xylose isomerase family. In terms of assembly, homotetramer. It depends on Mg(2+) as a cofactor.

The protein resides in the cytoplasm. It catalyses the reaction alpha-D-xylose = alpha-D-xylulofuranose. This chain is Xylose isomerase, found in Yersinia pestis bv. Antiqua (strain Angola).